A 187-amino-acid chain; its full sequence is Large ribosomal subunit protein bL9 (187 aa).

Residues 168 to 187 are disordered; that stretch reads EEAPAEEDVAAEETSEAAEA.

Belongs to the bacterial ribosomal protein bL9 family.

Functionally, binds to the 23S rRNA. This chain is Large ribosomal subunit protein bL9, found in Paramagnetospirillum magneticum (strain ATCC 700264 / AMB-1) (Magnetospirillum magneticum).